A 152-amino-acid polypeptide reads, in one-letter code: MMDNKDYKKFYLIREDVLPESVVKTLKIKDALKSDPTLSIYDAVKQFDLSRSAFYKYRETIFPVDDKMLDHREFTLILYVTDIVGMLARVLDVISKLELSVLTIHQSIPMEEKATITLSLNAKSKETSVEDVIGALRNLDYVSKVELISMSM.

One can recognise an ACT domain in the interval 75–150; it reads TLILYVTDIV…YVSKVELISM (76 aa).

Belongs to the UPF0735 family.

The sequence is that of UPF0735 ACT domain-containing protein SAS1579 from Staphylococcus aureus (strain MSSA476).